Here is a 285-residue protein sequence, read N- to C-terminus: Enterobactin synthase component B (285 aa).

Residues alanine 2–alanine 213 form an isochorismatase region. Residues alanine 209–valine 284 form the Carrier domain. Mg(2+) is bound by residues aspartate 227, glycine 242, and aspartate 244. Serine 245 bears the O-(pantetheine 4'-phosphoryl)serine mark.

In the N-terminal section; belongs to the isochorismatase family. In terms of assembly, proteins EntB, EntD, EntE, and EntF form a multienzyme complex called enterobactin synthase. Homodimer. Also forms a specific pairwise interaction with EntC; this interaction likely facilitates substrate channeling to connect the EntB and EntC active sites. Mg(2+) serves as cofactor. Post-translationally, 4'-phosphopantetheine is transferred from CoA to a specific serine of apo-EntB by EntD. Holo-EntB so formed is then acylated with 2,3-dihydroxybenzoate in a reaction catalyzed by EntE.

It localises to the cytoplasm. It catalyses the reaction 3 2,3-dihydroxybenzoate + 3 L-serine + 6 ATP = enterobactin + 6 AMP + 6 diphosphate + 4 H(+). The enzyme catalyses isochorismate + H2O = (2S,3S)-2,3-dihydroxy-2,3-dihydrobenzoate + pyruvate. Its pathway is siderophore biosynthesis; enterobactin biosynthesis. Involved in the biosynthesis of the siderophore enterobactin (enterochelin), which is a macrocyclic trimeric lactone of N-(2,3-dihydroxybenzoyl)-serine. The serine trilactone serves as a scaffolding for the three catechol functionalities that provide hexadentate coordination for the tightly ligated iron(3+) atoms. EntB is a bifunctional protein that serves as an isochorismate lyase and an aryl carrier protein (ArCP). Catalyzes the conversion of isochorismate to 2,3-dihydro-2,3-dihydroxybenzoate (2,3-diDHB), the precursor of 2,3-dihydroxybenzoate (DHB). In the enterobactin assembly, EntB functions as an aryl carrier protein phosphopantetheinylated near the C terminus by EntD to yield holo-EntB, which is then acylated by EntE with 2,3-dihydroxybenzoyl-AMP to form DHB-holo-EntB. Then this product will serve in the formation of the amide bond between 2,3-dihydroxybenzoate (DHB) and L-serine. This chain is Enterobactin synthase component B, found in Escherichia coli O157:H7.